The following is a 141-amino-acid chain: Ubiquitin-like protein ATG12 (141 aa).

The segment at 24–54 is disordered; sequence LELSPETAIPEPPSSVAVSPGTEEPPGDTKK. G141 is covalently cross-linked (Glycyl lysine isopeptide (Gly-Lys) (interchain with K-? in acceptor protein)).

This sequence belongs to the ATG12 family. As to quaternary structure, forms a conjugate with ATG5. Part of the minor complex composed of 4 sets of ATG12-ATG5 and ATG16L1 (400 kDa); this complex interacts with ATG3 leading to disruption of ATG7 interaction and promotion of ATG8-like proteins lipidation. Forms an 800-kDa complex composed of ATG12-ATG5 and ATG16L2. Interacts with DHX58/RIG-1, IFIH1/MDA5 and MAVS/IPS-1 in monomeric form as well as in ATG12-ATG5 conjugate. The interaction with MAVS is further enhanced upon vesicular stomatitis virus (VSV) infection. Interacts with ATG3; this interaction is essential for phosphatidylethanolamine (PE)-conjugated ATG8-like proteins formation. Interacts with ATG7. Interacts with ATG10. The ATG12-ATG5 conjugate interacts with RAB33A; this interaction is bridged by ATG16L1 and promotes ATG12-ATG5-ATG16L1 complex recruitment to phagophores. Interacts with TECPR1. Interacts with SH3BGRL. The ATG12-ATG5 conjugate interacts with PDCD6IP (via the BRO1 domain); this interaction is bridged by ATG12 and promotes multiple PDCD6IP-mediated functions such as endolysosomal trafficking, macroautophagy and exosome biogenesis. In terms of processing, acetylated by EP300.

Its subcellular location is the cytoplasm. It localises to the preautophagosomal structure membrane. In terms of biological role, ubiquitin-like protein involved in autophagy vesicles formation. Conjugation with ATG5 through a ubiquitin-like conjugating system involving also ATG7 as an E1-like activating enzyme and ATG10 as an E2-like conjugating enzyme, is essential for its function. The ATG12-ATG5 conjugate acts as an E3-like enzyme which is required for lipidation of ATG8 family proteins and their association to the vesicle membranes. The ATG12-ATG5 conjugate also negatively regulates the innate antiviral immune response by blocking the type I IFN production pathway through direct association with RARRES3 and MAVS. Also plays a role in translation or delivery of incoming viral RNA to the translation apparatus. As part of the ATG8 conjugation system with ATG5 and ATG16L1, required for recruitment of LRRK2 to stressed lysosomes and induction of LRRK2 kinase activity in response to lysosomal stress. This Rattus norvegicus (Rat) protein is Ubiquitin-like protein ATG12.